Here is an 806-residue protein sequence, read N- to C-terminus: Leucine--tRNA ligase (806 aa).

Residues 40–51 carry the 'HIGH' region motif; it reads PYPSGSGLHVGH. Positions 576–580 match the 'KMSKS' region motif; it reads KMSKS. K579 contacts ATP.

The protein belongs to the class-I aminoacyl-tRNA synthetase family.

It localises to the cytoplasm. It carries out the reaction tRNA(Leu) + L-leucine + ATP = L-leucyl-tRNA(Leu) + AMP + diphosphate. The polypeptide is Leucine--tRNA ligase (Chlorobium phaeobacteroides (strain BS1)).